Consider the following 375-residue polypeptide: Queuine tRNA-ribosyltransferase (375 aa).

Asp94 functions as the Proton acceptor in the catalytic mechanism. Substrate-binding positions include 94–98 (DSGGF), Asp148, Gln191, and Gly218. An RNA binding region spans residues 249 to 255 (GVGTPED). The Nucleophile role is filled by Asp268. The RNA binding; important for wobble base 34 recognition stretch occupies residues 273 to 277 (TRIAR). The Zn(2+) site is built by Cys306, Cys308, Cys311, and His337.

Belongs to the queuine tRNA-ribosyltransferase family. As to quaternary structure, homodimer. Within each dimer, one monomer is responsible for RNA recognition and catalysis, while the other monomer binds to the replacement base PreQ1. Requires Zn(2+) as cofactor.

The catalysed reaction is 7-aminomethyl-7-carbaguanine + guanosine(34) in tRNA = 7-aminomethyl-7-carbaguanosine(34) in tRNA + guanine. The protein operates within tRNA modification; tRNA-queuosine biosynthesis. In terms of biological role, catalyzes the base-exchange of a guanine (G) residue with the queuine precursor 7-aminomethyl-7-deazaguanine (PreQ1) at position 34 (anticodon wobble position) in tRNAs with GU(N) anticodons (tRNA-Asp, -Asn, -His and -Tyr). Catalysis occurs through a double-displacement mechanism. The nucleophile active site attacks the C1' of nucleotide 34 to detach the guanine base from the RNA, forming a covalent enzyme-RNA intermediate. The proton acceptor active site deprotonates the incoming PreQ1, allowing a nucleophilic attack on the C1' of the ribose to form the product. After dissociation, two additional enzymatic reactions on the tRNA convert PreQ1 to queuine (Q), resulting in the hypermodified nucleoside queuosine (7-(((4,5-cis-dihydroxy-2-cyclopenten-1-yl)amino)methyl)-7-deazaguanosine). The polypeptide is Queuine tRNA-ribosyltransferase (Caldanaerobacter subterraneus subsp. tengcongensis (strain DSM 15242 / JCM 11007 / NBRC 100824 / MB4) (Thermoanaerobacter tengcongensis)).